Here is a 1256-residue protein sequence, read N- to C-terminus: Nephrin (1256 aa).

An N-terminal signal peptide occupies residues 1-35 (MGAKEATVRGPGASPVHRTCHLIPLLLAGMLTTGL). Residues 36–1078 (AQSPVPTSAP…PGPPRLPLLP (1043 aa)) lie on the Extracellular side of the membrane. 6 Ig-like C2-type domains span residues 39-144 (PVPT…VILS), 149-247 (PKVL…ASFT), 256-347 (PPVI…RSIT), 354-448 (PSAV…KSLT), 454-554 (PAQK…TQLV), and 558-649 (PPTN…ETVS). The N-linked (GlcNAc...) asparagine glycan is linked to Asn-54. Disulfide bonds link Cys-67–Cys-125, Cys-174–Cys-231, and Cys-279–Cys-331. Residues Asn-370 and Asn-415 are each glycosylated (N-linked (GlcNAc...) asparagine). A disulfide bridge links Cys-375 with Cys-431. Ser-446 is modified (phosphoserine). A disulfide bridge links Cys-479 with Cys-542. A disordered region spans residues 491-516 (TWLKDSRPVNDPRQSQEPRRVQLGSV). Basic and acidic residues predominate over residues 494–510 (KDSRPVNDPRQSQEPRR). Residues Asn-561, Asn-578, Asn-591, and Asn-722 are each glycosylated (N-linked (GlcNAc...) asparagine). Cys-581 and Cys-637 are disulfide-bonded. Ig-like C2-type domains are found at residues 754 to 846 (PTIR…LVRL) and 852 to 953 (PQVD…VSIS). Cystine bridges form between Cys-775–Cys-830 and Cys-877–Cys-934. The 95-residue stretch at 957 to 1051 (PPLGLKVVSV…GIQVSITTPG (95 aa)) folds into the Fibronectin type-III domain. A disordered region spans residues 1048 to 1071 (TTPGLDQAPEDTDQPLPTEQPPGP). Residues 1079–1099 (VLFAVGGLLLLSNASCVGGLL) traverse the membrane as a helical segment. At 1100–1256 (WRRRLRRLAE…LPFELRGHLV (157 aa)) the chain is on the cytoplasmic side. Ser-1112 carries the phosphoserine modification. Residues 1112-1128 (SEKTEAGSEEDRIRNEY) show a composition bias toward basic and acidic residues. The disordered stretch occupies residues 1112-1143 (SEKTEAGSEEDRIRNEYEESQWTGDRDTRSST). Thr-1115 carries the phosphothreonine modification. Ser-1119 bears the Phosphoserine mark. Tyr-1208 carries the post-translational modification Phosphotyrosine; by FYN.

This sequence belongs to the immunoglobulin superfamily. In terms of assembly, interacts with NPHS2 and with CD2AP (via C-terminal domain). Interacts with MAGI1 (via PDZ 2 and 3 domains) forming a tripartite complex with IGSF5/JAM4. Forms a complex with ACTN4, CASK, IQGAP1, MAGI2, SPTAN1 and SPTBN1. Interacts with DDN; the interaction is direct. Self-associates (via the Ig-like domains). Also interacts (via the Ig-like domains) with KIRREL1 and KIRREL2; the interaction with KIRREL1 is dependent on KIRREL1 glycosylation. Interacts with KIRREL3. Interacts with phosphatidylinositol 3-kinase regulatory subunit PIK3R1; the interaction is reduced by high glucose levels. Phosphorylated at Tyr-1208 by FYN, leading to the recruitment and activation of phospholipase C-gamma-1/PLCG1. Tyrosine phosphorylation is reduced by high glucose levels. Dephosphorylated by tensin TNS2 which leads to reduced binding of NPHN1 to PIK3R1. In terms of tissue distribution, expressed in kidney glomeruli. In the embryo, expressed in the mesonephric kidney at 11 dpc with strong expression in cranial tubules with podocyte-like structures. Expression is observed in the podocytes of the developing kidney from 13 dpc. High expression is also detected in the developing cerebellum, hindbrain, spinal cord, retina and hypothalamus. Expressed in skeletal muscle during myoblast fusion such as in the adult following acute injury and in the embryo but not detected in uninjured adult skeletal muscle. Isoform 1 and isoform 2 are expressed in the newborn brain and developing cerebellum. Isoform 1 is the predominant isoform in adult kidney.

It is found in the cell membrane. Seems to play a role in the development or function of the kidney glomerular filtration barrier. Regulates glomerular vascular permeability. May anchor the podocyte slit diaphragm to the actin cytoskeleton. Plays a role in skeletal muscle formation through regulation of myoblast fusion. In Mus musculus (Mouse), this protein is Nephrin (Nphs1).